We begin with the raw amino-acid sequence, 747 residues long: E3 UFM1-protein ligase 1 homolog (747 aa).

Residues 403–468 (EKKKQCGSKA…GTVQVNSEEL (66 aa)) form a disordered region. Basic residues predominate over residues 429 to 438 (GGKGGKKGGK). Residues 439-449 (GGKNGGGGGKG) show a composition bias toward gly residues. Residues 450–465 (ATSSVPTGSGTVQVNS) are compositionally biased toward polar residues.

It belongs to the UFL1 family.

E3 UFM1-protein ligase that mediates ufmylation of target proteins. This Caenorhabditis briggsae protein is E3 UFM1-protein ligase 1 homolog (ufl-1).